The primary structure comprises 293 residues: Formamidopyrimidine-DNA glycosylase (293 aa).

Pro2 functions as the Schiff-base intermediate with DNA in the catalytic mechanism. Residue Glu3 is the Proton donor of the active site. Residue Lys60 is the Proton donor; for beta-elimination activity of the active site. His110, Arg129, and Lys174 together coordinate DNA. An FPG-type zinc finger spans residues Asn259–Lys293. Arg283 acts as the Proton donor; for delta-elimination activity in catalysis.

It belongs to the FPG family. In terms of assembly, monomer. Zn(2+) serves as cofactor.

The enzyme catalyses Hydrolysis of DNA containing ring-opened 7-methylguanine residues, releasing 2,6-diamino-4-hydroxy-5-(N-methyl)formamidopyrimidine.. The catalysed reaction is 2'-deoxyribonucleotide-(2'-deoxyribose 5'-phosphate)-2'-deoxyribonucleotide-DNA = a 3'-end 2'-deoxyribonucleotide-(2,3-dehydro-2,3-deoxyribose 5'-phosphate)-DNA + a 5'-end 5'-phospho-2'-deoxyribonucleoside-DNA + H(+). Functionally, involved in base excision repair of DNA damaged by oxidation or by mutagenic agents. Acts as a DNA glycosylase that recognizes and removes damaged bases. Has a preference for oxidized purines, such as 7,8-dihydro-8-oxoguanine (8-oxoG). Has AP (apurinic/apyrimidinic) lyase activity and introduces nicks in the DNA strand. Cleaves the DNA backbone by beta-delta elimination to generate a single-strand break at the site of the removed base with both 3'- and 5'-phosphates. The sequence is that of Formamidopyrimidine-DNA glycosylase from Prochlorococcus marinus (strain MIT 9515).